A 1198-amino-acid chain; its full sequence is Integrator complex subunit 2 (1198 aa).

The chain crosses the membrane as a helical span at residues 421–437 (FVSLSFCMLLAFSTLVS).

The protein belongs to the Integrator subunit 2 family. As to quaternary structure, component of the Integrator complex, composed of core subunits INTS1, INTS2, INTS3, INTS4, INTS5, INTS6, INTS7, INTS8, INTS9/RC74, INTS10, INTS11/CPSF3L, INTS12, INTS13, INTS14 and INTS15. The core complex associates with protein phosphatase 2A subunits PPP2CA and PPP2R1A, to form the Integrator-PP2A (INTAC) complex.

It is found in the nucleus. Its subcellular location is the nucleus membrane. The protein resides in the cytoplasm. Functionally, component of the integrator complex, a multiprotein complex that terminates RNA polymerase II (Pol II) transcription in the promoter-proximal region of genes. The integrator complex provides a quality checkpoint during transcription elongation by driving premature transcription termination of transcripts that are unfavorably configured for transcriptional elongation: the complex terminates transcription by (1) catalyzing dephosphorylation of the C-terminal domain (CTD) of Pol II subunit POLR2A/RPB1 and SUPT5H/SPT5, (2) degrading the exiting nascent RNA transcript via endonuclease activity and (3) promoting the release of Pol II from bound DNA. The integrator complex is also involved in terminating the synthesis of non-coding Pol II transcripts, such as enhancer RNAs (eRNAs), small nuclear RNAs (snRNAs), telomerase RNAs and long non-coding RNAs (lncRNAs). Mediates recruitment of cytoplasmic dynein to the nuclear envelope, probably as component of the integrator complex. This is Integrator complex subunit 2 (Ints2) from Mus musculus (Mouse).